The following is a 115-amino-acid chain: MNMLTALSVNIALSTCLIAIAFWLPQLNLYTEKANPYECGFDPMSSARLPFSMKFFLVAITFLLFDLEIALLLPLPWAIQTNNINTMMLTAFILVSVLALGLAYEWMQKGLEWTE.

3 helical membrane-spanning segments follow: residues 4–24 (LTAL…AFWL), 55–75 (FFLV…LLPL), and 87–107 (MMLT…YEWM).

This sequence belongs to the complex I subunit 3 family. As to quaternary structure, core subunit of respiratory chain NADH dehydrogenase (Complex I) which is composed of 45 different subunits. Interacts with TMEM186. Interacts with TMEM242.

It is found in the mitochondrion inner membrane. The catalysed reaction is a ubiquinone + NADH + 5 H(+)(in) = a ubiquinol + NAD(+) + 4 H(+)(out). Core subunit of the mitochondrial membrane respiratory chain NADH dehydrogenase (Complex I) which catalyzes electron transfer from NADH through the respiratory chain, using ubiquinone as an electron acceptor. Essential for the catalytic activity of complex I. In Peromyscus boylii (Brush deermouse), this protein is NADH-ubiquinone oxidoreductase chain 3.